We begin with the raw amino-acid sequence, 503 residues long: Serine/threonine-protein kinase chk-1 (503 aa).

Residues 24 to 286 (YRVVQTLGEG…IEQIQADPWY (263 aa)) enclose the Protein kinase domain. ATP-binding positions include 30-38 (LGEGAFGEV) and Lys54. The active-site Proton acceptor is Asp150. The interval 320 to 346 (SAKRRHLETPNEKSTLAERQNASFSQP) is disordered. The span at 331 to 346 (EKSTLAERQNASFSQP) shows a compositional bias: polar residues. Ser344 carries the phosphoserine modification.

Belongs to the protein kinase superfamily. CAMK Ser/Thr protein kinase family. NIM1 subfamily. In terms of tissue distribution, expressed in the germline.

The protein resides in the cytoplasm. Its subcellular location is the nucleus. It localises to the perinuclear region. The enzyme catalyses L-seryl-[protein] + ATP = O-phospho-L-seryl-[protein] + ADP + H(+). It catalyses the reaction L-threonyl-[protein] + ATP = O-phospho-L-threonyl-[protein] + ADP + H(+). Its function is as follows. Serine/threonine-protein kinase which is required for checkpoint-mediated cell cycle arrest and activation of DNA repair in response to the presence of DNA damage or unreplicated DNA. May also negatively regulate cell cycle progression during unperturbed cell cycles. Required for checkpoint mediated cell cycle arrest in response to DNA damage in germline cells. Delays cell-cycle reentry of the Z2 and Z3 primordial germ cells in response to transcription-induced DNA damage as they emerge from cell cycle arrest in L1 larvae. Essential for embryogenesis. The sequence is that of Serine/threonine-protein kinase chk-1 from Caenorhabditis elegans.